The primary structure comprises 182 residues: UPF0397 protein BCQ_2505 (182 aa).

5 consecutive transmembrane segments (helical) span residues 9 to 29 (VVAIGIGAALYGILGLWGFSI), 40 to 60 (AILTVFGALFGPVAGLLIGLI), 71 to 91 (WGIWWGWVISSGIIGFAMGFI), 114 to 134 (ITGLIGIVIAIIFAGAFDIIV), and 142 to 162 (IVIQVLGATIADVIVFLVLGL).

This sequence belongs to the UPF0397 family.

The protein resides in the cell membrane. In Bacillus cereus (strain Q1), this protein is UPF0397 protein BCQ_2505.